Consider the following 292-residue polypeptide: High-affinity heme uptake system protein IsdE (292 aa).

The signal sequence occupies residues M1–S19. C20 is lipidated: N-palmitoyl cysteine. C20 is lipidated: S-diacylglycerol cysteine. The 257-residue stretch at R35–K291 folds into the Fe/B12 periplasmic-binding domain. Residues V41, A42, S60, Y61, M78, and H229 each coordinate heme.

The protein belongs to the bacterial solute-binding protein 8 family. Heme b serves as cofactor.

Its subcellular location is the cell membrane. Its function is as follows. Involved in heme (porphyrin) scavenging. Binds Fe(2+) and Fe(3+) heme but the largest fraction is Fe(2+) heme. Functions as a high-affinity heme binding protein and probably has a role in relaying heme-iron from cell wall-anchored isd proteins receptors to the probable permease IsdF. In Staphylococcus aureus (strain Mu3 / ATCC 700698), this protein is High-affinity heme uptake system protein IsdE (isdE).